We begin with the raw amino-acid sequence, 201 residues long: Peptidyl-tRNA hydrolase (201 aa).

Position 15 (Y15) interacts with tRNA. H20 functions as the Proton acceptor in the catalytic mechanism. TRNA is bound by residues Y66, N68, and N114.

Belongs to the PTH family. As to quaternary structure, monomer.

Its subcellular location is the cytoplasm. The catalysed reaction is an N-acyl-L-alpha-aminoacyl-tRNA + H2O = an N-acyl-L-amino acid + a tRNA + H(+). Hydrolyzes ribosome-free peptidyl-tRNAs (with 1 or more amino acids incorporated), which drop off the ribosome during protein synthesis, or as a result of ribosome stalling. Functionally, catalyzes the release of premature peptidyl moieties from peptidyl-tRNA molecules trapped in stalled 50S ribosomal subunits, and thus maintains levels of free tRNAs and 50S ribosomes. The sequence is that of Peptidyl-tRNA hydrolase from Burkholderia mallei (strain ATCC 23344).